A 374-amino-acid chain; its full sequence is 4-hydroxy-3-methylbut-2-en-1-yl diphosphate synthase (flavodoxin) (374 aa).

4 residues coordinate [4Fe-4S] cluster: cysteine 270, cysteine 273, cysteine 305, and glutamate 312.

This sequence belongs to the IspG family. Requires [4Fe-4S] cluster as cofactor.

The catalysed reaction is (2E)-4-hydroxy-3-methylbut-2-enyl diphosphate + oxidized [flavodoxin] + H2O + 2 H(+) = 2-C-methyl-D-erythritol 2,4-cyclic diphosphate + reduced [flavodoxin]. Its pathway is isoprenoid biosynthesis; isopentenyl diphosphate biosynthesis via DXP pathway; isopentenyl diphosphate from 1-deoxy-D-xylulose 5-phosphate: step 5/6. Functionally, converts 2C-methyl-D-erythritol 2,4-cyclodiphosphate (ME-2,4cPP) into 1-hydroxy-2-methyl-2-(E)-butenyl 4-diphosphate. The chain is 4-hydroxy-3-methylbut-2-en-1-yl diphosphate synthase (flavodoxin) from Cellvibrio japonicus (strain Ueda107) (Pseudomonas fluorescens subsp. cellulosa).